The primary structure comprises 303 residues: Recombination-associated protein RdgC (303 aa).

Belongs to the RdgC family.

It localises to the cytoplasm. The protein resides in the nucleoid. Its function is as follows. May be involved in recombination. The chain is Recombination-associated protein RdgC from Shewanella piezotolerans (strain WP3 / JCM 13877).